The following is a 78-amino-acid chain: Probable [Fe-S]-dependent transcriptional repressor (78 aa).

Positions 56, 61, 64, and 70 each coordinate iron-sulfur cluster.

This sequence belongs to the FeoC family.

Functionally, may function as a transcriptional regulator that controls feoABC expression. This Escherichia coli O17:K52:H18 (strain UMN026 / ExPEC) protein is Probable [Fe-S]-dependent transcriptional repressor.